The sequence spans 414 residues: Seminal vesicle secretory protein 2 (414 aa).

The N-terminal stretch at Met1–Gly22 is a signal peptide. Gln23 carries the post-translational modification Pyrrolidone carboxylic acid. 13 consecutive repeat copies span residues Glu108 to Ser120, Gly127 to Ser139, Glu140 to Ser152, Gly153 to Ser165, Gly166 to Ser178, Gly179 to Ser191, Gly192 to Ser204, Glu205 to Gln217, Tyr224 to Leu236, Glu237 to Gln249, Tyr257 to Leu269, Asp275 to Gln287, and Ser299 to Leu311. A 13 X 13 AA tandem repeats region spans residues Glu108–Leu311. 3 disordered regions span residues Lys170–Lys228, Ala240–Gln294, and Gly306–Glu369. The span at Ala240–Gln259 shows a compositional bias: polar residues. A compositionally biased stretch (low complexity) spans Gln277–Gln294. Composition is skewed to polar residues over residues Gly306 to Lys321 and Ser342 to Met351. Low complexity predominate over residues Ser358–Glu369.

Post-translationally, the repeating unit appears to be involved in the formation of the copulatory plug via a transglutaminase reaction cross-linking glutamine and lysine residues.

Its function is as follows. The rat seminal vesicle contains six major androgen-dependent secretory proteins referred to as SVS I-VI. The SVS I-III proteins appear to be components of the rat copulatory plug, with the SVS II protein being the major component. The protein is Seminal vesicle secretory protein 2 (Svs2) of Rattus norvegicus (Rat).